Here is a 159-residue protein sequence, read N- to C-terminus: ATP-dependent Clp protease adapter protein CLPS1, chloroplastic (159 aa).

The N-terminal 44 residues, 1–44, are a transit peptide targeting the chloroplast; that stretch reads METAICGRLALAPSSLFNSKSGDKHLVSKGPCVNRSILMTLSTS.

This sequence belongs to the ClpS family. Interacts with CLPC1 (via N-terminus) and CLPC2, but not with CLPt1 or CLPT2. Binds to ClpF; this interaction stimulates their association with ClpC. In terms of tissue distribution, expressed exclusively in photosynthetic green tissues with high levels in young, developing leaf tissues.

The protein resides in the plastid. It is found in the chloroplast stroma. Its function is as follows. Small adapter protein that modulate the activity of CLPC. Involved in plastid biogenesis in particular when chloroplast protein synthesis capacity is a limiting factor. Probably involved in substrate selection for plastid Clp protease system. Recruitment to ClpC chaperones is facilitated by CLPF thus forming a binary adapter for selective substrate recognition and delivery to plastid Clp protease system (CLPC). This Arabidopsis thaliana (Mouse-ear cress) protein is ATP-dependent Clp protease adapter protein CLPS1, chloroplastic.